A 33-amino-acid chain; its full sequence is Neutrophil defensin 4 (33 aa).

3 disulfide bridges follow: Cys3/Cys31, Cys5/Cys20, and Cys10/Cys30.

The protein belongs to the alpha-defensin family. In terms of processing, HANP-2 could be a product of proteolytic N-terminal amino acid removal from HANP-4.

The protein resides in the secreted. In terms of biological role, bactericidal activity, greater against Gram-positive bacteria. Low anti-fungi activity. The protein is Neutrophil defensin 4 of Mesocricetus auratus (Golden hamster).